Reading from the N-terminus, the 617-residue chain is Dihydroxy-acid dehydratase (617 aa).

Mg(2+) is bound at residue aspartate 81. Cysteine 122 is a [2Fe-2S] cluster binding site. 2 residues coordinate Mg(2+): aspartate 123 and lysine 124. Lysine 124 is subject to N6-carboxylysine. Cysteine 195 is a binding site for [2Fe-2S] cluster. Glutamate 491 serves as a coordination point for Mg(2+). Serine 517 acts as the Proton acceptor in catalysis.

This sequence belongs to the IlvD/Edd family. In terms of assembly, homodimer. [2Fe-2S] cluster serves as cofactor. The cofactor is Mg(2+).

It carries out the reaction (2R)-2,3-dihydroxy-3-methylbutanoate = 3-methyl-2-oxobutanoate + H2O. It catalyses the reaction (2R,3R)-2,3-dihydroxy-3-methylpentanoate = (S)-3-methyl-2-oxopentanoate + H2O. The protein operates within amino-acid biosynthesis; L-isoleucine biosynthesis; L-isoleucine from 2-oxobutanoate: step 3/4. It participates in amino-acid biosynthesis; L-valine biosynthesis; L-valine from pyruvate: step 3/4. Functions in the biosynthesis of branched-chain amino acids. Catalyzes the dehydration of (2R,3R)-2,3-dihydroxy-3-methylpentanoate (2,3-dihydroxy-3-methylvalerate) into 2-oxo-3-methylpentanoate (2-oxo-3-methylvalerate) and of (2R)-2,3-dihydroxy-3-methylbutanoate (2,3-dihydroxyisovalerate) into 2-oxo-3-methylbutanoate (2-oxoisovalerate), the penultimate precursor to L-isoleucine and L-valine, respectively. This Nitrosococcus oceani (strain ATCC 19707 / BCRC 17464 / JCM 30415 / NCIMB 11848 / C-107) protein is Dihydroxy-acid dehydratase.